Here is a 363-residue protein sequence, read N- to C-terminus: MLYNLLVSHINSCYIFSIFYNVIVRSGIAILLSFSISFSLIPILIKYFKYWKNLAQPIRNLGHKSHIAKAGTPTMGGIAIIFSIIISTLMLADYKNIYVLTTIFGMLSLAILGLIDDYQKVTKKNTKGINATCKLISQIMVSIICCMIVNYNLNSEIANHLIIPFFKKLTIDLSIFYIPFALFIIIGSSNAVNLTDGLDGLVTVPIIIVSFCLGLMCYLADNAQYININHLQILHVQQASELTVLCSAIIGASLGFLWYNIQPAKIFMGDVGSLSLGGAIGIISVISKNEIRLGIIGGLFVIEALSAIIQIYSIRYLGGKRVFKMAPIHHHFEQIGWSESKIVSRFWLLSIIFSLIGLSSLIL.

11 helical membrane-spanning segments follow: residues 4-24 (NLLVSHINSCYIFSIFYNVIV), 28-48 (IAILLSFSISFSLIPILIKYF), 72-92 (TPTMGGIAIIFSIIISTLMLA), 96-116 (NIYVLTTIFGMLSLAILGLID), 129-149 (INATCKLISQIMVSIICCMIV), 169-189 (LTIDLSIFYIPFALFIIIGSS), 200-220 (GLVTVPIIIVSFCLGLMCYLA), 241-261 (ELTVLCSAIIGASLGFLWYNI), 266-286 (IFMGDVGSLSLGGAIGIISVI), 294-314 (GIIGGLFVIEALSAIIQIYSI), and 342-362 (IVSRFWLLSIIFSLIGLSSLI).

It belongs to the glycosyltransferase 4 family. MraY subfamily. It depends on Mg(2+) as a cofactor.

It is found in the cell inner membrane. The enzyme catalyses UDP-N-acetyl-alpha-D-muramoyl-L-alanyl-gamma-D-glutamyl-meso-2,6-diaminopimeloyl-D-alanyl-D-alanine + di-trans,octa-cis-undecaprenyl phosphate = di-trans,octa-cis-undecaprenyl diphospho-N-acetyl-alpha-D-muramoyl-L-alanyl-D-glutamyl-meso-2,6-diaminopimeloyl-D-alanyl-D-alanine + UMP. Its pathway is cell wall biogenesis; peptidoglycan biosynthesis. In terms of biological role, catalyzes the initial step of the lipid cycle reactions in the biosynthesis of the cell wall peptidoglycan: transfers peptidoglycan precursor phospho-MurNAc-pentapeptide from UDP-MurNAc-pentapeptide onto the lipid carrier undecaprenyl phosphate, yielding undecaprenyl-pyrophosphoryl-MurNAc-pentapeptide, known as lipid I. This is Phospho-N-acetylmuramoyl-pentapeptide-transferase from Orientia tsutsugamushi (strain Ikeda) (Rickettsia tsutsugamushi).